The chain runs to 281 residues: uncharacterized protein (281 aa).

Residues 1-23 (MKLYRSLKAALLPGICTSILLAS) form the signal peptide. Cysteine 24 carries the N-palmitoyl cysteine lipid modification. Cysteine 24 is lipidated: S-diacylglycerol cysteine. Residues 145 to 165 (HHDHNHMHNHEHEHEEHHDEE) are disordered. Basic and acidic residues predominate over residues 150 to 161 (HMHNHEHEHEEH).

It is found in the cell membrane. This is an uncharacterized protein from Mycoplasma genitalium (strain ATCC 33530 / DSM 19775 / NCTC 10195 / G37) (Mycoplasmoides genitalium).